A 241-amino-acid chain; its full sequence is MAGHSKWANIQHRKGRQDEKRGAAFSKIAKEITVASKMGGGDINFNPRLRVAVDKAKGVNMPKDKIDTAIKKGTGELEGVEYIEIRYEGYGIGGAAIMVDCLTDNKVRTVAEVRHAFSKFGGNMGSDGCVAFQFKHCGQMIFAPGTDEGALMDAAIEAGADDVTTNDDGSIEVLTPPNDYMAVKDALEAAGFKPEFGEVTMKPEGENVFAGEEGVKMQKLLDALENLDDVQEIYTTAVIED.

Residues 1–22 are disordered; sequence MAGHSKWANIQHRKGRQDEKRG.

It belongs to the TACO1 family.

The protein localises to the cytoplasm. This is Probable transcriptional regulatory protein Daro_4067 from Dechloromonas aromatica (strain RCB).